We begin with the raw amino-acid sequence, 338 residues long: Mitochondrial glutathione transporter SLC25A40 (338 aa).

Solcar repeat units lie at residues 13–131, 139–223, and 233–327; these read VTPL…LSAL, NETC…LKKW, and PTFM…GKAF. Helical transmembrane passes span 19–39, 103–123, 142–162, 199–220, 239–259, and 298–318; these read MLASCTGAILTSVIVTPLDVV, LWSGLPPTLVMAVPATVIYFT, CIPIVAGIVARFGAVTVISPL, WAPTVLRDVPFSAMYWYNYEIL, FTSGALSGSFAAVATLPFDVV, and GLFSGLIPRLIKIAPACAIMI.

It belongs to the mitochondrial carrier (TC 2.A.29) family.

It localises to the mitochondrion inner membrane. The enzyme catalyses glutathione(in) = glutathione(out). Probable mitochondrial transporter required for glutathione import into mitochondria. Glutathione, which plays key roles in oxidative metabolism, is produced exclusively in the cytosol and is imported in many organelles. Mitochondrial glutathione is required for the activity and stability of proteins containing iron-sulfur clusters, as well as erythropoiesis. This is Mitochondrial glutathione transporter SLC25A40 from Homo sapiens (Human).